A 540-amino-acid polypeptide reads, in one-letter code: DM7 family protein GM11956 (540 aa).

Positions 416 to 443 (ATDTRGRDEIRTSCDQPQEKDEGSAEAD) are disordered. Basic and acidic residues predominate over residues 417–443 (TDTRGRDEIRTSCDQPQEKDEGSAEAD).

The protein belongs to the DM7 family.

In Drosophila sechellia (Fruit fly), this protein is DM7 family protein GM11956.